The sequence spans 246 residues: tRNA (guanine-N(1)-)-methyltransferase (246 aa).

S-adenosyl-L-methionine-binding positions include glycine 113 and 132 to 137; that span reads LGDYVL.

Belongs to the RNA methyltransferase TrmD family. Homodimer.

Its subcellular location is the cytoplasm. It carries out the reaction guanosine(37) in tRNA + S-adenosyl-L-methionine = N(1)-methylguanosine(37) in tRNA + S-adenosyl-L-homocysteine + H(+). In terms of biological role, specifically methylates guanosine-37 in various tRNAs. The chain is tRNA (guanine-N(1)-)-methyltransferase from Lactiplantibacillus plantarum (strain ATCC BAA-793 / NCIMB 8826 / WCFS1) (Lactobacillus plantarum).